The primary structure comprises 137 residues: Transcription antitermination protein NusB (137 aa).

It belongs to the NusB family.

Involved in transcription antitermination. Required for transcription of ribosomal RNA (rRNA) genes. Binds specifically to the boxA antiterminator sequence of the ribosomal RNA (rrn) operons. The chain is Transcription antitermination protein NusB from Clavibacter sepedonicus (Clavibacter michiganensis subsp. sepedonicus).